The primary structure comprises 386 residues: Succinate--CoA ligase [ADP-forming] subunit beta (386 aa).

The 236-residue stretch at 9–244 (KELFANYGVP…LDEEEPLEVE (236 aa)) folds into the ATP-grasp domain. ATP contacts are provided by residues lysine 46, 53 to 55 (GRG), glutamate 99, leucine 102, and glutamate 107. Positions 199 and 213 each coordinate Mg(2+). Substrate contacts are provided by residues asparagine 264 and 321–323 (GIL).

The protein belongs to the succinate/malate CoA ligase beta subunit family. Heterotetramer of two alpha and two beta subunits. Requires Mg(2+) as cofactor.

The enzyme catalyses succinate + ATP + CoA = succinyl-CoA + ADP + phosphate. It carries out the reaction GTP + succinate + CoA = succinyl-CoA + GDP + phosphate. It participates in carbohydrate metabolism; tricarboxylic acid cycle; succinate from succinyl-CoA (ligase route): step 1/1. Succinyl-CoA synthetase functions in the citric acid cycle (TCA), coupling the hydrolysis of succinyl-CoA to the synthesis of either ATP or GTP and thus represents the only step of substrate-level phosphorylation in the TCA. The beta subunit provides nucleotide specificity of the enzyme and binds the substrate succinate, while the binding sites for coenzyme A and phosphate are found in the alpha subunit. This is Succinate--CoA ligase [ADP-forming] subunit beta from Desulfatibacillum aliphaticivorans.